The primary structure comprises 117 residues: Immunoglobulin heavy variable 7-4-1 (117 aa).

Positions 1-19 are cleaved as a signal peptide; the sequence is MDWTWRILFLVAAATGAHS. Residues 20 to 44 form a framework-1 region; it reads QVQLVQSGSELKKPGASVKVSCKAS. The Ig-like domain maps to 20-117; the sequence is QVQLVQSGSE…EDTAVYYCAR (98 aa). Cys41 and Cys115 form a disulfide bridge. Positions 45–52 are complementarity-determining-1; it reads GYTFTSYA. A framework-2 region spans residues 53-69; that stretch reads MNWVRQAPGQGLEWMGW. A complementarity-determining-2 region spans residues 70–77; that stretch reads INTNTGNP. A framework-3 region spans residues 78–115; it reads TYAQGFTGRFVFSLDTSVSTAYLQICSLKAEDTAVYYC. The interval 116–117 is complementarity-determining-3; the sequence is AR.

Immunoglobulins are composed of two identical heavy chains and two identical light chains; disulfide-linked.

It localises to the secreted. The protein localises to the cell membrane. Its function is as follows. V region of the variable domain of immunoglobulin heavy chains that participates in the antigen recognition. Immunoglobulins, also known as antibodies, are membrane-bound or secreted glycoproteins produced by B lymphocytes. In the recognition phase of humoral immunity, the membrane-bound immunoglobulins serve as receptors which, upon binding of a specific antigen, trigger the clonal expansion and differentiation of B lymphocytes into immunoglobulins-secreting plasma cells. Secreted immunoglobulins mediate the effector phase of humoral immunity, which results in the elimination of bound antigens. The antigen binding site is formed by the variable domain of one heavy chain, together with that of its associated light chain. Thus, each immunoglobulin has two antigen binding sites with remarkable affinity for a particular antigen. The variable domains are assembled by a process called V-(D)-J rearrangement and can then be subjected to somatic hypermutations which, after exposure to antigen and selection, allow affinity maturation for a particular antigen. The chain is Immunoglobulin heavy variable 7-4-1 from Homo sapiens (Human).